Consider the following 333-residue polypeptide: Adenosine deaminase (333 aa).

Zn(2+) contacts are provided by His-12 and His-14. Residues His-14, Asp-16, and Gly-170 each coordinate substrate. Residue His-197 coordinates Zn(2+). The active-site Proton donor is Glu-200. Position 278 (Asp-278) interacts with Zn(2+). Asp-279 contributes to the substrate binding site.

The protein belongs to the metallo-dependent hydrolases superfamily. Adenosine and AMP deaminases family. Adenosine deaminase subfamily. It depends on Zn(2+) as a cofactor.

The enzyme catalyses adenosine + H2O + H(+) = inosine + NH4(+). It carries out the reaction 2'-deoxyadenosine + H2O + H(+) = 2'-deoxyinosine + NH4(+). Catalyzes the hydrolytic deamination of adenosine and 2-deoxyadenosine. The protein is Adenosine deaminase of Escherichia coli O7:K1 (strain IAI39 / ExPEC).